We begin with the raw amino-acid sequence, 852 residues long: Elongation factor 2 (852 aa).

One can recognise a tr-type G domain in the interval 17–356 (RNIRNMSVIA…MIAFHLPSPV (340 aa)). Position 26–33 (26–33 (AHVDHGKS)) interacts with GTP. 2 positions are modified to phosphothreonine: T57 and T59. GTP-binding positions include 170–173 (NKMD) and 227–229 (SGL). Diphthamide is present on H709.

This sequence belongs to the TRAFAC class translation factor GTPase superfamily. Classic translation factor GTPase family. EF-G/EF-2 subfamily. In terms of processing, phosphorylation by EF-2 kinase completely inactivates EF-2. Post-translationally, AMPylated by fic-1.

It is found in the cytoplasm. It carries out the reaction GTP + H2O = GDP + phosphate + H(+). Catalyzes the GTP-dependent ribosomal translocation step during translation elongation. During this step, the ribosome changes from the pre-translocational (PRE) to the post-translocational (POST) state as the newly formed A-site-bound peptidyl-tRNA and P-site-bound deacylated tRNA move to the P and E sites, respectively. Catalyzes the coordinated movement of the two tRNA molecules, the mRNA and conformational changes in the ribosome. Involved in the morphogenesis of epidermal tissues. In Caenorhabditis elegans, this protein is Elongation factor 2 (eef-2).